We begin with the raw amino-acid sequence, 559 residues long: Branched-chain-amino-acid aminotransferase-like protein 2 (559 aa).

It belongs to the class-IV pyridoxal-phosphate-dependent aminotransferase family.

The chain is Branched-chain-amino-acid aminotransferase-like protein 2 from Arabidopsis thaliana (Mouse-ear cress).